Here is a 398-residue protein sequence, read N- to C-terminus: Tryptophan synthase beta chain (398 aa).

Position 88 is an N6-(pyridoxal phosphate)lysine (Lys88).

The protein belongs to the TrpB family. As to quaternary structure, tetramer of two alpha and two beta chains. Pyridoxal 5'-phosphate serves as cofactor.

It catalyses the reaction (1S,2R)-1-C-(indol-3-yl)glycerol 3-phosphate + L-serine = D-glyceraldehyde 3-phosphate + L-tryptophan + H2O. It functions in the pathway amino-acid biosynthesis; L-tryptophan biosynthesis; L-tryptophan from chorismate: step 5/5. The beta subunit is responsible for the synthesis of L-tryptophan from indole and L-serine. The sequence is that of Tryptophan synthase beta chain from Haemophilus influenzae (strain PittGG).